Reading from the N-terminus, the 148-residue chain is Large ribosomal subunit protein bL9 (148 aa).

This sequence belongs to the bacterial ribosomal protein bL9 family.

Functionally, binds to the 23S rRNA. This Syntrophobacter fumaroxidans (strain DSM 10017 / MPOB) protein is Large ribosomal subunit protein bL9.